The sequence spans 514 residues: G-protein coupled receptor Mth (514 aa).

The N-terminal stretch at 1–24 is a signal peptide; sequence MKTLLVLRISTVILVVLVIQKSYA. Topologically, residues 25–218 are extracellular; that stretch reads DILECDYFDT…CLIVPSITGQ (194 aa). 5 disulfides stabilise this stretch: Cys29–Cys83, Cys85–Cys90, Cys94–Cys188, Cys95–Cys106, and Cys150–Cys209. N-linked (GlcNAc...) asparagine glycosylation occurs at Asn45. N-linked (GlcNAc...) asparagine glycosylation is found at Asn109, Asn123, Asn170, and Asn198. Residues 219–239 form a helical membrane-spanning segment; it reads TVVMISSLICMVLTIAVYLFV. The Cytoplasmic segment spans residues 240–248; that stretch reads KKLQNLHGK. The chain crosses the membrane as a helical span at residues 249 to 269; sequence CFICYMVCLFMGYLFLLLDLW. The Extracellular segment spans residues 270-278; that stretch reads QISISFCKP. A helical membrane pass occupies residues 279-299; sequence AGFLGYFFVMAAFFWLSVISL. The Cytoplasmic portion of the chain corresponds to 300-320; the sequence is HLWNTFRGSSHKANRFLFEHR. Residues 321–341 form a helical membrane-spanning segment; the sequence is FLAYNTYAWGMAVVLTGITVL. Residues 342 to 370 are Extracellular-facing; sequence ADNIVENQDWNPRVGHEGHCWIYTQAWSA. A helical membrane pass occupies residues 371–391; it reads MLYFYGPMVFLIAFNITMFIL. The Cytoplasmic segment spans residues 392–424; sequence TAKRILGVKKDIQNFAHRQERKQKLNSDKQTYT. A helical transmembrane segment spans residues 425-445; sequence FFLRLFIIMGLSWSLEIGSYF. The Extracellular portion of the chain corresponds to 446–454; the sequence is SQSNQTWAN. N-linked (GlcNAc...) asparagine glycosylation occurs at Asn449. Residues 455–475 form a helical membrane-spanning segment; it reads VFLVADYLNWSQGIIIFILFV. Residues 476 to 514 are Cytoplasmic-facing; that stretch reads LKRSTWRLLQESIRGEGEEVNNSEEEISLENTTTRNVLL.

Belongs to the G-protein coupled receptor 2 family. Mth subfamily. As to quaternary structure, homodimer.

It localises to the cell membrane. Involved in biological aging and stress response. Essential for adult survival. Required in the presynaptic motor neuron to up-regulate neurotransmitter exocytosis at larval glutamatergic neuromuscular junctions (NMJs). Regulates a step associated with docking and clustering of vesicles at release sites. SP/Acp70A and sun are agonists that activate mth in vitro. This Drosophila melanogaster (Fruit fly) protein is G-protein coupled receptor Mth (mth).